The sequence spans 320 residues: Methylenetetrahydrofolate dehydrogenase [NAD(+)] (320 aa).

The active site involves Cys150. NAD(+) contacts are provided by residues 185–186 (RS), 208–209 (DV), and 274–276 (FAC).

This sequence belongs to the tetrahydrofolate dehydrogenase/cyclohydrolase family. In terms of assembly, homodimer. Post-translationally, the N-terminus is blocked.

It is found in the cytoplasm. The protein localises to the nucleus. It catalyses the reaction (6R)-5,10-methylene-5,6,7,8-tetrahydrofolate + NAD(+) = (6R)-5,10-methenyltetrahydrofolate + NADH. Its function is as follows. Catalyzes oxidation of cytoplasmic one-carbon units for purine biosynthesis. This chain is Methylenetetrahydrofolate dehydrogenase [NAD(+)] (MTD1), found in Saccharomyces cerevisiae (strain ATCC 204508 / S288c) (Baker's yeast).